Here is a 55-residue protein sequence, read N- to C-terminus: Large ribosomal subunit protein bL33 (55 aa).

In terms of processing, the protein is methylated on either Ala-2 or Lys-3.

The polypeptide is Large ribosomal subunit protein bL33 (Rhodopseudomonas palustris (strain ATCC BAA-98 / CGA009)).